The primary structure comprises 284 residues: MRASLIDGKAIAKKLRDSVKEEVNLRISNGQRVPGLAVILVGCDPASQVYVGSKRKACEEVGFISRSYDLPHTTSEQELLALVSELNNDDSIDGILVQLPLPKNLNADLIIEHINPLKDVDGFHPSNVGKLVLRQPGLRPCTPKGIVTLIESTGIDPKGLDALVIGASNIVGRPMGLELLLAKCTVTTTHRFTKDLEGKVRNADLLVVAVGKPGFIPGEWIKEGAIVIDVGINRLDNGKLVGDVDFGAAKERASFITPVPGGVGPMTVASLIENTLIACQQSSQ.

NADP(+)-binding positions include 166–168 (GAS) and Ile-232.

This sequence belongs to the tetrahydrofolate dehydrogenase/cyclohydrolase family. In terms of assembly, homodimer.

It catalyses the reaction (6R)-5,10-methylene-5,6,7,8-tetrahydrofolate + NADP(+) = (6R)-5,10-methenyltetrahydrofolate + NADPH. The catalysed reaction is (6R)-5,10-methenyltetrahydrofolate + H2O = (6R)-10-formyltetrahydrofolate + H(+). It functions in the pathway one-carbon metabolism; tetrahydrofolate interconversion. Its function is as follows. Catalyzes the oxidation of 5,10-methylenetetrahydrofolate to 5,10-methenyltetrahydrofolate and then the hydrolysis of 5,10-methenyltetrahydrofolate to 10-formyltetrahydrofolate. This is Bifunctional protein FolD 2 from Colwellia psychrerythraea (strain 34H / ATCC BAA-681) (Vibrio psychroerythus).